The sequence spans 252 residues: Geranylgeranylglyceryl phosphate synthase (252 aa).

The Mg(2+) site is built by Asp-26 and Ser-55. Residues 174–180 (YLEAGSG), 205–206 (GG), and 227–228 (GT) each bind sn-glycerol 1-phosphate.

It belongs to the GGGP/HepGP synthase family. Group II subfamily. As to quaternary structure, homotetramer. Homohexamer. The cofactor is Mg(2+).

The protein localises to the cytoplasm. It carries out the reaction sn-glycerol 1-phosphate + (2E,6E,10E)-geranylgeranyl diphosphate = sn-3-O-(geranylgeranyl)glycerol 1-phosphate + diphosphate. It participates in membrane lipid metabolism; glycerophospholipid metabolism. In terms of biological role, prenyltransferase that catalyzes the transfer of the geranylgeranyl moiety of geranylgeranyl diphosphate (GGPP) to the C3 hydroxyl of sn-glycerol-1-phosphate (G1P). This reaction is the first ether-bond-formation step in the biosynthesis of archaeal membrane lipids. The polypeptide is Geranylgeranylglyceryl phosphate synthase (Thermococcus kodakarensis (strain ATCC BAA-918 / JCM 12380 / KOD1) (Pyrococcus kodakaraensis (strain KOD1))).